A 131-amino-acid chain; its full sequence is Large ribosomal subunit protein bL12 (131 aa).

It belongs to the bacterial ribosomal protein bL12 family. As to quaternary structure, homodimer. Part of the ribosomal stalk of the 50S ribosomal subunit. Forms a multimeric L10(L12)X complex, where L10 forms an elongated spine to which 2 to 4 L12 dimers bind in a sequential fashion. Binds GTP-bound translation factors.

Functionally, forms part of the ribosomal stalk which helps the ribosome interact with GTP-bound translation factors. Is thus essential for accurate translation. In Prochlorococcus marinus subsp. pastoris (strain CCMP1986 / NIES-2087 / MED4), this protein is Large ribosomal subunit protein bL12.